Consider the following 240-residue polypeptide: MSAPLSLFVTGTDTEIGKTFVSAALLHGFARAGLRAAAMKPVAAGAYERDGAWRNEDADQLDAAANVALPAAIRTPFLLKAPAAPHIVAAREGVALDIGTIVDAHRRACEMADVIVVEGVGGVRVPLADTRDTADLAVALGLPVVLVVGVRLGCISHALLTAEAIAARGLPLAGWVANRIDPAMPFADDNIDTLRAWLEREHRAPLLGALAHMSPPSPDAASHALDVNLLLNALRAAAPR.

15–20 (EIGKTF) lines the ATP pocket. Threonine 19 is a Mg(2+) binding site. Residue lysine 40 is part of the active site. ATP is bound by residues aspartate 57, 118–121 (EGVG), and 178–179 (NR). Positions 57 and 118 each coordinate Mg(2+).

It belongs to the dethiobiotin synthetase family. Homodimer. It depends on Mg(2+) as a cofactor.

It localises to the cytoplasm. It catalyses the reaction (7R,8S)-7,8-diammoniononanoate + CO2 + ATP = (4R,5S)-dethiobiotin + ADP + phosphate + 3 H(+). It functions in the pathway cofactor biosynthesis; biotin biosynthesis; biotin from 7,8-diaminononanoate: step 1/2. Catalyzes a mechanistically unusual reaction, the ATP-dependent insertion of CO2 between the N7 and N8 nitrogen atoms of 7,8-diaminopelargonic acid (DAPA, also called 7,8-diammoniononanoate) to form a ureido ring. The protein is ATP-dependent dethiobiotin synthetase BioD of Burkholderia mallei (strain NCTC 10247).